The following is a 409-amino-acid chain: DNA double-strand break repair protein Mre11 (409 aa).

Residues D9, H11, D50, and E85 each coordinate Mn(2+). The Proton donor role is filled by H86. Mn(2+)-binding residues include H170, H199, and H201.

This sequence belongs to the MRE11/RAD32 family. As to quaternary structure, homodimer. Forms a heterotetramer composed of two Mre11 subunits and two Rad50 subunits. The cofactor is Mn(2+).

Nuclease activity is regulated by Rad50. Part of the Rad50/Mre11 complex, which is involved in the early steps of DNA double-strand break (DSB) repair. The complex may facilitate opening of the processed DNA ends to aid in the recruitment of HerA and NurA. Mre11 binds to DSB ends and has both double-stranded 3'-5' exonuclease activity and single-stranded endonuclease activity. The protein is DNA double-strand break repair protein Mre11 of Aeropyrum pernix (strain ATCC 700893 / DSM 11879 / JCM 9820 / NBRC 100138 / K1).